We begin with the raw amino-acid sequence, 107 residues long: Nucleoid-associated protein RC1_2305 (107 aa).

Belongs to the YbaB/EbfC family. In terms of assembly, homodimer.

It localises to the cytoplasm. It is found in the nucleoid. Binds to DNA and alters its conformation. May be involved in regulation of gene expression, nucleoid organization and DNA protection. This is Nucleoid-associated protein RC1_2305 from Rhodospirillum centenum (strain ATCC 51521 / SW).